The sequence spans 317 residues: Large ribosomal subunit protein uL10 (317 aa).

The protein belongs to the universal ribosomal protein uL10 family. As to quaternary structure, P0 forms a pentameric complex by interaction with dimers of P1 and P2. In terms of processing, phosphorylated.

Functionally, ribosomal protein P0 is the functional equivalent of E.coli protein L10. The protein is Large ribosomal subunit protein uL10 (rplp0) of Ictalurus punctatus (Channel catfish).